We begin with the raw amino-acid sequence, 180 residues long: Probable DNA replication complex GINS protein PSF2 (180 aa).

This sequence belongs to the GINS2/PSF2 family. In terms of assembly, component of the GINS complex which is a heterotetramer of gins1, gins2, gins3 and gins4.

The protein localises to the nucleus. Required for correct functioning of the GINS complex, a complex that plays an essential role in the initiation of DNA replication, and progression of DNA replication forks. GINS complex is a core component of CDC45-MCM-GINS (CMG) helicase, the molecular machine that unwinds template DNA during replication, and around which the replisome is built. In Caenorhabditis elegans, this protein is Probable DNA replication complex GINS protein PSF2 (psf-2).